The following is a 177-amino-acid chain: B9 domain-containing protein 2 (177 aa).

Positions 2–118 (AEVHIIGQIL…EIGTWKVAPN (117 aa)) constitute a C2 B9-type domain.

Belongs to the B9D family. Probable component of the tectonic-like complex (also named MKS complex), composed of B9d1, B9d2, Cc2d2a, Mks1 and tctn. Expressed in chordotonal neurons in the antennae (at protein level). Expressed in spermatids (at protein level).

It localises to the cytoplasm. The protein resides in the cytoskeleton. The protein localises to the cilium basal body. Functionally, probable component of the tectonic-like complex (also named MKS complex), a complex localized at the transition zone of primary cilia. Has a role in ciliary structure and function. The polypeptide is B9 domain-containing protein 2 (Drosophila melanogaster (Fruit fly)).